The sequence spans 496 residues: UDP-N-acetylmuramoyl-L-alanyl-D-glutamate--2,6-diaminopimelate ligase (496 aa).

Serine 32 lines the UDP-N-acetyl-alpha-D-muramoyl-L-alanyl-D-glutamate pocket. 116–122 contributes to the ATP binding site; the sequence is GTNGKTT. UDP-N-acetyl-alpha-D-muramoyl-L-alanyl-D-glutamate-binding positions include 158–159, serine 185, glutamine 191, and arginine 193; that span reads TT. Lysine 225 is subject to N6-carboxylysine. Meso-2,6-diaminopimelate-binding positions include arginine 389, 413–416, glycine 464, and glutamate 468; that span reads DNPR. Positions 413–416 match the Meso-diaminopimelate recognition motif motif; sequence DNPR.

The protein belongs to the MurCDEF family. MurE subfamily. Mg(2+) serves as cofactor. Carboxylation is probably crucial for Mg(2+) binding and, consequently, for the gamma-phosphate positioning of ATP.

It is found in the cytoplasm. It catalyses the reaction UDP-N-acetyl-alpha-D-muramoyl-L-alanyl-D-glutamate + meso-2,6-diaminopimelate + ATP = UDP-N-acetyl-alpha-D-muramoyl-L-alanyl-gamma-D-glutamyl-meso-2,6-diaminopimelate + ADP + phosphate + H(+). It functions in the pathway cell wall biogenesis; peptidoglycan biosynthesis. Its function is as follows. Catalyzes the addition of meso-diaminopimelic acid to the nucleotide precursor UDP-N-acetylmuramoyl-L-alanyl-D-glutamate (UMAG) in the biosynthesis of bacterial cell-wall peptidoglycan. This is UDP-N-acetylmuramoyl-L-alanyl-D-glutamate--2,6-diaminopimelate ligase from Trichormus variabilis (strain ATCC 29413 / PCC 7937) (Anabaena variabilis).